The sequence spans 363 residues: Spermidine/putrescine import ATP-binding protein PotA (363 aa).

The 231-residue stretch at 6–236 (VEFKNVIKKY…PINHFVADFI (231 aa)) folds into the ABC transporter domain. 38–45 (GPSGCGKT) provides a ligand contact to ATP.

The protein belongs to the ABC transporter superfamily. Spermidine/putrescine importer (TC 3.A.1.11.1) family. As to quaternary structure, the complex is composed of two ATP-binding proteins (PotA), two transmembrane proteins (PotB and PotC) and a solute-binding protein (PotD).

It is found in the cell membrane. It carries out the reaction ATP + H2O + polyamine-[polyamine-binding protein]Side 1 = ADP + phosphate + polyamineSide 2 + [polyamine-binding protein]Side 1.. Its function is as follows. Part of the ABC transporter complex PotABCD involved in spermidine/putrescine import. Responsible for energy coupling to the transport system. In Latilactobacillus sakei subsp. sakei (strain 23K) (Lactobacillus sakei subsp. sakei), this protein is Spermidine/putrescine import ATP-binding protein PotA.